The sequence spans 786 residues: von Willebrand factor A domain-containing protein 5A (786 aa).

Positions 1 to 131 constitute a VIT domain; that stretch reads MVHFCGLLTL…KAAVTLKYVQ (131 aa). Residues 281–462 form the VWFA domain; sequence EFIFLMDRSG…KALRTLKRSL (182 aa).

As to expression, expressed at low level in many tissues. Not expressed in 80% of tumor cell lines tested.

Functionally, may play a role in tumorigenesis as a tumor suppressor. Altered expression of this protein and disruption of the molecular pathway it is involved in, may contribute directly to or modify tumorigenesis. The sequence is that of von Willebrand factor A domain-containing protein 5A (VWA5A) from Homo sapiens (Human).